A 285-amino-acid chain; its full sequence is Eukaryotic translation initiation factor 3 subunit F-2 (285 aa).

Residues 11–145 (VFIKPLVLFQ…TRLYCAVEIG (135 aa)) enclose the MPN domain.

Belongs to the eIF-3 subunit F family. In terms of assembly, component of the eukaryotic translation initiation factor 3 (eIF-3) complex. The eIF-3 complex interacts with pix.

The protein resides in the cytoplasm. Functionally, component of the eukaryotic translation initiation factor 3 (eIF-3) complex, which is involved in protein synthesis of a specialized repertoire of mRNAs and, together with other initiation factors, stimulates binding of mRNA and methionyl-tRNAi to the 40S ribosome. The eIF-3 complex specifically targets and initiates translation of a subset of mRNAs involved in cell proliferation. The sequence is that of Eukaryotic translation initiation factor 3 subunit F-2 from Drosophila yakuba (Fruit fly).